The primary structure comprises 310 residues: Protoheme IX farnesyltransferase (310 aa).

The next 9 membrane-spanning stretches (helical) occupy residues 21 to 43, 48 to 70, 95 to 115, 118 to 138, 147 to 167, 174 to 194, 220 to 240, 243 to 263, and 289 to 309; these read LLKP…VAPV, MIAL…LNMW, GEAL…LGLA, LFAA…YSMW, IVIG…VATG, LFMF…LALF, VLVY…TGIG, LYLA…VRIW, and LFLH…GLGG.

This sequence belongs to the UbiA prenyltransferase family. Protoheme IX farnesyltransferase subfamily. As to quaternary structure, interacts with CtaA.

It is found in the cell inner membrane. It catalyses the reaction heme b + (2E,6E)-farnesyl diphosphate + H2O = Fe(II)-heme o + diphosphate. The protein operates within porphyrin-containing compound metabolism; heme O biosynthesis; heme O from protoheme: step 1/1. Its function is as follows. Converts heme B (protoheme IX) to heme O by substitution of the vinyl group on carbon 2 of heme B porphyrin ring with a hydroxyethyl farnesyl side group. This chain is Protoheme IX farnesyltransferase, found in Cereibacter sphaeroides (strain KD131 / KCTC 12085) (Rhodobacter sphaeroides).